A 145-amino-acid chain; its full sequence is Basic phospholipase A2 GL1-1 (145 aa).

The N-terminal stretch at 1-21 (MYPAHLLVLLAVCVSLLGASA) is a signal peptide. The propeptide occupies 22–27 (IPPLPL). Disulfide bonds link C38–C98, C54–C144, C56–C72, C71–C125, C78–C118, C87–C111, and C105–C116. Y55, G57, and G59 together coordinate Ca(2+). The active site involves H75. D76 serves as a coordination point for Ca(2+). D119 is an active-site residue.

It belongs to the phospholipase A2 family. Group I subfamily. D49 sub-subfamily. The cofactor is Ca(2+). Expressed by the venom gland.

The protein localises to the secreted. It catalyses the reaction a 1,2-diacyl-sn-glycero-3-phosphocholine + H2O = a 1-acyl-sn-glycero-3-phosphocholine + a fatty acid + H(+). PLA2 catalyzes the calcium-dependent hydrolysis of the 2-acyl groups in 3-sn-phosphoglycerides. In Laticauda semifasciata (Black-banded sea krait), this protein is Basic phospholipase A2 GL1-1.